A 156-amino-acid polypeptide reads, in one-letter code: MAKVESFTLDHTAVKAPYVRLITVETGAKGDKISNFDLRFVQPNENAIPTAGLHTIEHMLAGYLRDHMDGVIDCSPFGCRTGFHLIMWGEHDTTEVATALKASLNDIINASWEDVQGTDIKSCGNYRDHSLFSAQEWCKKILADGISTDPFERKVI.

Positions 54, 58, and 123 each coordinate Fe cation.

This sequence belongs to the LuxS family. As to quaternary structure, homodimer. Fe cation serves as cofactor.

It carries out the reaction S-(5-deoxy-D-ribos-5-yl)-L-homocysteine = (S)-4,5-dihydroxypentane-2,3-dione + L-homocysteine. In terms of biological role, involved in the synthesis of autoinducer 2 (AI-2) which is secreted by bacteria and is used to communicate both the cell density and the metabolic potential of the environment. The regulation of gene expression in response to changes in cell density is called quorum sensing. Catalyzes the transformation of S-ribosylhomocysteine (RHC) to homocysteine (HC) and 4,5-dihydroxy-2,3-pentadione (DPD). The sequence is that of S-ribosylhomocysteine lyase from Ligilactobacillus salivarius (strain UCC118) (Lactobacillus salivarius).